The sequence spans 370 residues: Queuine tRNA-ribosyltransferase (370 aa).

Catalysis depends on Asp89, which acts as the Proton acceptor. Substrate-binding positions include Asp89–Phe93, Asp143, and Gly214. The interval Gly245 to Asp251 is RNA binding. Residue Asp264 is the Nucleophile of the active site. Residues Thr269 to Arg273 form an RNA binding; important for wobble base 34 recognition region. The Zn(2+) site is built by Cys302, Cys304, Cys307, and His333.

The protein belongs to the queuine tRNA-ribosyltransferase family. As to quaternary structure, homodimer. Within each dimer, one monomer is responsible for RNA recognition and catalysis, while the other monomer binds to the replacement base PreQ1. The cofactor is Zn(2+).

It carries out the reaction 7-aminomethyl-7-carbaguanine + guanosine(34) in tRNA = 7-aminomethyl-7-carbaguanosine(34) in tRNA + guanine. It participates in tRNA modification; tRNA-queuosine biosynthesis. Catalyzes the base-exchange of a guanine (G) residue with the queuine precursor 7-aminomethyl-7-deazaguanine (PreQ1) at position 34 (anticodon wobble position) in tRNAs with GU(N) anticodons (tRNA-Asp, -Asn, -His and -Tyr). Catalysis occurs through a double-displacement mechanism. The nucleophile active site attacks the C1' of nucleotide 34 to detach the guanine base from the RNA, forming a covalent enzyme-RNA intermediate. The proton acceptor active site deprotonates the incoming PreQ1, allowing a nucleophilic attack on the C1' of the ribose to form the product. After dissociation, two additional enzymatic reactions on the tRNA convert PreQ1 to queuine (Q), resulting in the hypermodified nucleoside queuosine (7-(((4,5-cis-dihydroxy-2-cyclopenten-1-yl)amino)methyl)-7-deazaguanosine). In Buchnera aphidicola subsp. Acyrthosiphon pisum (strain APS) (Acyrthosiphon pisum symbiotic bacterium), this protein is Queuine tRNA-ribosyltransferase.